A 525-amino-acid polypeptide reads, in one-letter code: M-phase inducer phosphatase 1 (525 aa).

The segment at 1 to 42 (MELGPEPPHRRRLLFTCSPTPAPQPTGKVQFGASRAGGLSPV) is disordered. The short motif at 74 to 84 (MGSSESTDSGF) is the Phosphodegron element. S76 bears the Phosphoserine; by CHEK1 mark. 3 positions are modified to phosphoserine; by NEK11: S79, S82, and S88. Residue S124 is modified to Phosphoserine; by CHEK1 and CHEK2. Residues 141–143 (KEN) carry the KEN box motif. The residue at position 178 (S178) is a Phosphoserine; by CHEK1. Residues 260–318 (FDSPSPCSSTSSCSTRAVKRADRSHEESPRGTKRRKSSEASPVKADVPEPTQLPHQSLS) are disordered. Positions 262 to 274 (SPSPCSSTSSCST) are enriched in low complexity. Residues 278–289 (KRADRSHEESPR) are compositionally biased toward basic and acidic residues. Residues S283 and S296 each carry the phosphoserine; by CHEK1 and CHEK2 modification. Residues 377 to 483 (LIKEFVIIDC…FFLKCQSHCE (107 aa)) form the Rhodanese domain. C432 is a catalytic residue. At T508 the chain carries Phosphothreonine; by CHEK1. Phosphoserine; by PLK3 occurs at positions 514 and 520.

Belongs to the MPI phosphatase family. As to quaternary structure, interacts with CCNB1/cyclin B1. Interacts with YWHAE/14-3-3 epsilon when phosphorylated. Interacts with CUL1 specifically when CUL1 is neddylated and active. Interacts with BTRC/BTRCP1 and FBXW11/BTRCP2. Interactions with CUL1, BTRC and FBXW11 are enhanced upon DNA damage. Interacts with CHEK2; mediates CDC25A phosphorylation and degradation in response to infrared-induced DNA damages. Interacts with HSP90AB1; prevents heat shock-mediated CDC25A degradation and contributes to cell cycle progression. In terms of processing, phosphorylated by CHEK1 on Ser-76, Ser-124, Ser-178, Ser-283, Ser-296 and Thr-508 during checkpoint mediated cell cycle arrest. Also phosphorylated by CHEK2 on Ser-124, Ser-283, and Ser-296 during checkpoint mediated cell cycle arrest. Phosphorylation on Ser-178 and Thr-508 creates binding sites for YWHAE/14-3-3 epsilon which inhibits CDC25A. Phosphorylation on Ser-76, Ser-124, Ser-178, Ser-283 and Ser-296 may also promote ubiquitin-dependent proteolysis of CDC25A by the SCF complex. Phosphorylation of CDC25A at Ser-76 by CHEK1 primes it for subsequent phosphorylation at Ser-79, Ser-82 and Ser-88 by NEK11. Phosphorylation by NEK11 is required for BTRC-mediated polyubiquitination and degradation. Phosphorylation by PIM1 leads to an increase in phosphatase activity. Phosphorylated by PLK3 following DNA damage, leading to promote its ubiquitination and degradation. Ubiquitinated by the anaphase promoting complex/cyclosome (APC/C) ubiquitin ligase complex that contains FZR1/CDH1 during G1 phase leading to its degradation by the proteasome. Ubiquitinated by a SCF complex containing BTRC and FBXW11 during S phase leading to its degradation by the proteasome. Deubiquitination by USP17L2/DUB3 leads to its stabilization.

The catalysed reaction is O-phospho-L-tyrosyl-[protein] + H2O = L-tyrosyl-[protein] + phosphate. Stimulated by B-type cyclins. Stimulated by PIM1-mediated phosphorylation. Functionally, tyrosine protein phosphatase which functions as a dosage-dependent inducer of mitotic progression. Directly dephosphorylates CDK1 and stimulates its kinase activity. Also dephosphorylates CDK2 in complex with cyclin-E, in vitro. In Rattus norvegicus (Rat), this protein is M-phase inducer phosphatase 1 (Cdc25a).